The primary structure comprises 312 residues: MKDYQILLYYCYTHIADPDAYREEHHLKCLELGLLGRIIIASEGLNGTVSGTEEGCRQYMEYVKADPRFEALEFKIEAHEGHAFQKLYVRVKPEIVHSSLKHVDPTKRTGKHLEPAEFKAMKDRDDVVVLDVRSNYEHQVGRFKNAVTIDMENFRDFPEKIKELDHLKGKKVLTYCTGGIKCEKASAFLLEQGFEDVYQLHGGIIKYGIEQGGEDFEGKCYVFDGRVIADVNKVNPSIISTCYVCGTLSDRMVNCSNPVCNRHEPMCEACGEKMQGACSEECKCHPEKRPYDGTGAYPKELNGYDPYLHVKR.

A Rhodanese domain is found at 123-216 (DRDDVVVLDV…YGIEQGGEDF (94 aa)). The Cysteine persulfide intermediate role is filled by C176.

The protein belongs to the TrhO family.

The catalysed reaction is uridine(34) in tRNA + AH2 + O2 = 5-hydroxyuridine(34) in tRNA + A + H2O. Catalyzes oxygen-dependent 5-hydroxyuridine (ho5U) modification at position 34 in tRNAs. The chain is tRNA uridine(34) hydroxylase from Cytophaga hutchinsonii (strain ATCC 33406 / DSM 1761 / CIP 103989 / NBRC 15051 / NCIMB 9469 / D465).